Reading from the N-terminus, the 404-residue chain is Cytochrome P450 monooxygenase avaI (404 aa).

Cys382 is a heme binding site.

Belongs to the cytochrome P450 family. Heme serves as cofactor.

The protein operates within secondary metabolite biosynthesis. Functionally, cytochrome P450 monooxygenase; part of the cluster that mediates the biosynthesis of a highly modified cyclo-arginine-tryptophan dipeptide (cRW). The first step of the pathway is perfornmed by the arginine-containing cyclodipeptide synthase (RCPDS) avaA that acts as the scaffold-generating enzyme and is responsible for formation of the cyclo-Arg-Trp (cRW) diketopiperazine. AvaB then acts as a multifunctional flavoenzyme that is responsible for generating the cyclo-Arg-formylkynurenine DKP, which can be deformylated by avaC. AvaB then further catalyzes an additional N-oxidation followed by cyclization and dehydration. The next step is an N-acetylation of the guanidine group catalyzed by the arginine N-acetyltransferase avaD. The roles of the additional enzymes identified within the ava cluster still have to be determined. The sequence is that of Cytochrome P450 monooxygenase avaI from Aspergillus versicolor.